A 129-amino-acid chain; its full sequence is Small ribosomal subunit protein uS11 (129 aa).

Belongs to the universal ribosomal protein uS11 family. As to quaternary structure, part of the 30S ribosomal subunit. Interacts with proteins S7 and S18. Binds to IF-3.

In terms of biological role, located on the platform of the 30S subunit, it bridges several disparate RNA helices of the 16S rRNA. Forms part of the Shine-Dalgarno cleft in the 70S ribosome. This Parvibaculum lavamentivorans (strain DS-1 / DSM 13023 / NCIMB 13966) protein is Small ribosomal subunit protein uS11.